Reading from the N-terminus, the 279-residue chain is D-aminoacyl-tRNA deacylase (279 aa).

The tract at residues 81 to 100 is disordered; the sequence is GRKSLTVHHPGNPTEDNSLG.

It belongs to the DtdA deacylase family. In terms of assembly, monomer. The cofactor is Zn(2+).

The catalysed reaction is a D-aminoacyl-tRNA + H2O = a tRNA + a D-alpha-amino acid + H(+). The enzyme catalyses glycyl-tRNA(Ala) + H2O = tRNA(Ala) + glycine + H(+). D-aminoacyl-tRNA deacylase with broad substrate specificity. By recycling D-aminoacyl-tRNA to D-amino acids and free tRNA molecules, this enzyme counteracts the toxicity associated with the formation of D-aminoacyl-tRNA entities in vivo. In Aeropyrum pernix (strain ATCC 700893 / DSM 11879 / JCM 9820 / NBRC 100138 / K1), this protein is D-aminoacyl-tRNA deacylase.